Reading from the N-terminus, the 339-residue chain is MQGFEDENRIITSTMKMEDIDIENSLRPKTLEDYLGQEKSKEQLSIFIEAAKSRNEQLDHVLLYGPPGLGKTTLASIIANEMGVNLRITSGPAIERAGDLAAILTNLNENDVLFIDEIHRINRSVEEVLYPAMEDFCLDIIIGKGPSARSIRLDLPKFTLIGATTRAGMLTNPLRDRFGVICKLDYYTVDELSKIVLRSSSILDAEIQSNGALELAKRSRGTPRIANRLLKRVRDFAQVRADGKITDKVAKDALELLGVDSLGLDFVDEKLLMTIIEKFRGGPVGLDTLAASIGEDRNTIEDVYEPYLLQLGFINRGPRGRVAMPLAYEHLKIPYPNEK.

Residues 1 to 187 (MQGFEDENRI…FGVICKLDYY (187 aa)) are large ATPase domain (RuvB-L). ATP-binding positions include L26, R27, G68, K71, T72, T73, 134 to 136 (EDF), R177, Y187, and R224. Position 72 (T72) interacts with Mg(2+). A small ATPAse domain (RuvB-S) region spans residues 188-258 (TVDELSKIVL…VAKDALELLG (71 aa)). The tract at residues 261–339 (SLGLDFVDEK…HLKIPYPNEK (79 aa)) is head domain (RuvB-H). DNA is bound by residues R297, R316, and R321.

It belongs to the RuvB family. As to quaternary structure, homohexamer. Forms an RuvA(8)-RuvB(12)-Holliday junction (HJ) complex. HJ DNA is sandwiched between 2 RuvA tetramers; dsDNA enters through RuvA and exits via RuvB. An RuvB hexamer assembles on each DNA strand where it exits the tetramer. Each RuvB hexamer is contacted by two RuvA subunits (via domain III) on 2 adjacent RuvB subunits; this complex drives branch migration. In the full resolvosome a probable DNA-RuvA(4)-RuvB(12)-RuvC(2) complex forms which resolves the HJ.

It localises to the cytoplasm. It catalyses the reaction ATP + H2O = ADP + phosphate + H(+). Its function is as follows. The RuvA-RuvB-RuvC complex processes Holliday junction (HJ) DNA during genetic recombination and DNA repair, while the RuvA-RuvB complex plays an important role in the rescue of blocked DNA replication forks via replication fork reversal (RFR). RuvA specifically binds to HJ cruciform DNA, conferring on it an open structure. The RuvB hexamer acts as an ATP-dependent pump, pulling dsDNA into and through the RuvAB complex. RuvB forms 2 homohexamers on either side of HJ DNA bound by 1 or 2 RuvA tetramers; 4 subunits per hexamer contact DNA at a time. Coordinated motions by a converter formed by DNA-disengaged RuvB subunits stimulates ATP hydrolysis and nucleotide exchange. Immobilization of the converter enables RuvB to convert the ATP-contained energy into a lever motion, pulling 2 nucleotides of DNA out of the RuvA tetramer per ATP hydrolyzed, thus driving DNA branch migration. The RuvB motors rotate together with the DNA substrate, which together with the progressing nucleotide cycle form the mechanistic basis for DNA recombination by continuous HJ branch migration. Branch migration allows RuvC to scan DNA until it finds its consensus sequence, where it cleaves and resolves cruciform DNA. This Clostridioides difficile (strain 630) (Peptoclostridium difficile) protein is Holliday junction branch migration complex subunit RuvB.